The chain runs to 619 residues: 1-deoxy-D-xylulose-5-phosphate synthase (619 aa).

Residues His-76 and 117–119 (AHS) contribute to the thiamine diphosphate site. Residue Asp-148 participates in Mg(2+) binding. Thiamine diphosphate is bound by residues 149–150 (GA), Asn-177, Tyr-284, and Glu-366. Asn-177 contacts Mg(2+).

It belongs to the transketolase family. DXPS subfamily. In terms of assembly, homodimer. Mg(2+) is required as a cofactor. Thiamine diphosphate serves as cofactor.

It carries out the reaction D-glyceraldehyde 3-phosphate + pyruvate + H(+) = 1-deoxy-D-xylulose 5-phosphate + CO2. It functions in the pathway metabolic intermediate biosynthesis; 1-deoxy-D-xylulose 5-phosphate biosynthesis; 1-deoxy-D-xylulose 5-phosphate from D-glyceraldehyde 3-phosphate and pyruvate: step 1/1. Functionally, catalyzes the acyloin condensation reaction between C atoms 2 and 3 of pyruvate and glyceraldehyde 3-phosphate to yield 1-deoxy-D-xylulose-5-phosphate (DXP). In Azoarcus sp. (strain BH72), this protein is 1-deoxy-D-xylulose-5-phosphate synthase.